The sequence spans 841 residues: DNA ligase (841 aa).

NAD(+) is bound by residues 33 to 37, 82 to 83, and E114; these read DAQYD and SL. K116 serves as the catalytic N6-AMP-lysine intermediate. 4 residues coordinate NAD(+): R137, E174, K300, and K324. The Zn(2+) site is built by C418, C421, C436, and C442. The BRCT domain maps to 758-841; sequence EKTGPLDGQT…AFLGEHGQQR (84 aa).

Belongs to the NAD-dependent DNA ligase family. LigA subfamily. Mg(2+) serves as cofactor. Mn(2+) is required as a cofactor.

It catalyses the reaction NAD(+) + (deoxyribonucleotide)n-3'-hydroxyl + 5'-phospho-(deoxyribonucleotide)m = (deoxyribonucleotide)n+m + AMP + beta-nicotinamide D-nucleotide.. DNA ligase that catalyzes the formation of phosphodiester linkages between 5'-phosphoryl and 3'-hydroxyl groups in double-stranded DNA using NAD as a coenzyme and as the energy source for the reaction. It is essential for DNA replication and repair of damaged DNA. In Xanthomonas oryzae pv. oryzae (strain MAFF 311018), this protein is DNA ligase.